Reading from the N-terminus, the 1228-residue chain is Myosin-1 (1228 aa).

The segment at 1–27 is disordered; sequence MAVTKRAGRRAQGGTQPAKGAQGVKKA. Residues 37–716 enclose the Myosin motor domain; that stretch reads VGVSDLTLLS…TLFALEHMRD (680 aa). Position 130-137 (130-137) interacts with ATP; the sequence is GESGAGKT. S358 carries the phosphoserine modification. The interval 405 to 487 is actin-binding; sequence TIGILDIYGF…PGIFAALNDA (83 aa). 2 consecutive IQ domains span residues 720–740 and 741–768; these read HNMA…KTEC and AIKI…SGHK. The TH1 domain maps to 776–962; sequence RRTYSLIGYR…SGSVQVPPGA (187 aa). Disordered regions lie at residues 953–1040, 1053–1109, and 1169–1228; these read SGSV…AESA, QSLV…PAAP, and QGGA…DDDW. The segment covering 1053–1063 has biased composition (polar residues); that stretch reads QSLVNPRSGQG. A compositionally biased stretch (low complexity) spans 1064–1092; that stretch reads QQQQQHHQAYQQPTAAQPAATSYSPAPAK. The segment covering 1093–1106 has biased composition (pro residues); the sequence is AAPPPPPPAPPAAP. The 62-residue stretch at 1109-1170 folds into the SH3 domain; it reads PAEPTYKALY…PAAYLEEVQG (62 aa). Low complexity predominate over residues 1180–1194; sequence PTAGGASAGASLAEA.

It belongs to the TRAFAC class myosin-kinesin ATPase superfamily. Myosin family. Phosphorylation of the TEDS site (Ser-358) is required for the polarization of the actin cytoskeleton. Phosphorylation probably activates the myosin-I ATPase activity.

It localises to the cytoplasm. The protein localises to the cytoskeleton. The protein resides in the actin patch. Type-I myosin implicated in the organization of the actin cytoskeleton. Required for proper actin cytoskeleton polarization. At the cell cortex, assembles in patch-like structures together with proteins from the actin-polymerizing machinery and promotes actin assembly. Functions as actin nucleation-promoting factor (NPF) for the Arp2/3 complex. The protein is Myosin-1 (MYO1) of Yarrowia lipolytica (strain CLIB 122 / E 150) (Yeast).